Here is a 135-residue protein sequence, read N- to C-terminus: CDGSH iron-sulfur domain-containing protein 2B (135 aa).

The Lumenal segment spans residues 1-37 (MVLETISKIIKTQLPAYLKKFPLPETIGGFARLTVLD). Residues 38–60 (WLRLLPLLGILALLGYLTIRPFL) form a helical membrane-spanning segment. Residues 61 to 135 (PKKKKQKDSL…GPLILKKKIL (75 aa)) lie on the Cytoplasmic side of the membrane. Residues C99, C101, C110, and H114 each coordinate [2Fe-2S] cluster.

The protein belongs to the CISD protein family. CISD2 subfamily. As to quaternary structure, homodimer. Requires [2Fe-2S] cluster as cofactor.

The protein resides in the endoplasmic reticulum membrane. Its subcellular location is the mitochondrion outer membrane. Regulator of autophagy that contributes to antagonize becn1-mediated cellular autophagy at the endoplasmic reticulum. Participates in the interaction of bcl2 with becn1 and is required for bcl2-mediated depression of endoplasmic reticulum Ca(2+) stores during autophagy. The protein is CDGSH iron-sulfur domain-containing protein 2B (cisd2b) of Salmo salar (Atlantic salmon).